The chain runs to 231 residues: Uracil-DNA glycosylase (231 aa).

The active-site Proton acceptor is Asp71.

It belongs to the uracil-DNA glycosylase (UDG) superfamily. UNG family.

It localises to the cytoplasm. The catalysed reaction is Hydrolyzes single-stranded DNA or mismatched double-stranded DNA and polynucleotides, releasing free uracil.. Excises uracil residues from the DNA which can arise as a result of misincorporation of dUMP residues by DNA polymerase or due to deamination of cytosine. The sequence is that of Uracil-DNA glycosylase from Pseudomonas aeruginosa (strain ATCC 15692 / DSM 22644 / CIP 104116 / JCM 14847 / LMG 12228 / 1C / PRS 101 / PAO1).